The primary structure comprises 292 residues: Ribonuclease HIII (292 aa).

Residues 76 to 292 (TNLIGTDEVG…TQKAIKIAQL (217 aa)) form the RNase H type-2 domain. Residues Asp-82, Glu-83, and Asp-186 each contribute to the a divalent metal cation site.

Belongs to the RNase HII family. RnhC subfamily. The cofactor is Mn(2+). Mg(2+) serves as cofactor.

The protein resides in the cytoplasm. The catalysed reaction is Endonucleolytic cleavage to 5'-phosphomonoester.. In terms of biological role, endonuclease that specifically degrades the RNA of RNA-DNA hybrids. In Lactococcus lactis subsp. lactis (strain IL1403) (Streptococcus lactis), this protein is Ribonuclease HIII.